An 820-amino-acid chain; its full sequence is Phenylalanine--tRNA ligase beta subunit (820 aa).

In terms of domain architecture, tRNA-binding spans 42–154 (KGGLEGLVIG…EDAVPGTLAK (113 aa)). A B5 domain is found at 413–489 (AQDFIVELTY…RIYGYNNVEI (77 aa)). Mg(2+)-binding residues include aspartate 467, aspartate 473, glutamate 476, and aspartate 477. One can recognise an FDX-ACB domain in the interval 727-820 (SKFPAVKRDL…LEDKLGAKLR (94 aa)).

The protein belongs to the phenylalanyl-tRNA synthetase beta subunit family. Type 1 subfamily. As to quaternary structure, tetramer of two alpha and two beta subunits. It depends on Mg(2+) as a cofactor.

It is found in the cytoplasm. It catalyses the reaction tRNA(Phe) + L-phenylalanine + ATP = L-phenylalanyl-tRNA(Phe) + AMP + diphosphate + H(+). This chain is Phenylalanine--tRNA ligase beta subunit, found in Bacteroides fragilis (strain YCH46).